Consider the following 195-residue polypeptide: Porimin (195 aa).

A signal peptide spans 1–23 (MALCARAALLLGVLQVLALLGAA). The Extracellular segment spans residues 24 to 152 (QDPTDAQGSA…PTKGKGSKFD (129 aa)). N-linked (GlcNAc...) asparagine glycans are attached at residues Asn-36, Asn-45, Asn-51, Asn-59, Asn-109, and Asn-115. A disordered region spans residues 99 to 127 (VTPTASKSTPNASASPNSTHTSASMTTPA). Residues 101–126 (PTASKSTPNASASPNSTHTSASMTTP) are compositionally biased toward polar residues. Residues 153 to 173 (AGSFVGGIVLTLGVLSILYIG) form a helical membrane-spanning segment. Residues 174–195 (CKMYYSRRGIRYRSIDEHDAII) are Cytoplasmic-facing. Position 187 is a phosphoserine (Ser-187).

The protein belongs to the CD164 family.

The protein localises to the membrane. Functionally, implicated in oncotic cell death, characterized by cell swelling, organelle swelling, vacuolization and increased membrane permeability. In Mus musculus (Mouse), this protein is Porimin (Tmem123).